The sequence spans 608 residues: Membrane protein insertase YidC (608 aa).

The chain crosses the membrane as a helical span at residues 8-28; that stretch reads LLLATALSFLVILGWYFFFPP. The segment at 33-61 is disordered; sequence PQPATEVTETAPQGDTTAPAAAPSAGAAT. The next 5 helical transmembrane spans lie at 378–398, 448–468, 482–502, 506–526, and 542–562; these read MGVAIIALTFLLKILVFPLAY, LPILIQIPIFFSLYKVIFVTL, LSVPDPTSLFNLFGLLPWAAP, SLLSLVFIGILPILLGVSMWV, and IFAWMPWVFMFMLGGFASGLV.

This sequence belongs to the OXA1/ALB3/YidC family. Type 1 subfamily. In terms of assembly, interacts with the Sec translocase complex via SecD. Specifically interacts with transmembrane segments of nascent integral membrane proteins during membrane integration.

Its subcellular location is the cell inner membrane. Required for the insertion and/or proper folding and/or complex formation of integral membrane proteins into the membrane. Involved in integration of membrane proteins that insert both dependently and independently of the Sec translocase complex, as well as at least some lipoproteins. Aids folding of multispanning membrane proteins. The sequence is that of Membrane protein insertase YidC from Ruegeria sp. (strain TM1040) (Silicibacter sp.).